A 122-amino-acid polypeptide reads, in one-letter code: Basic phospholipase A2 Ts-G6D49 (122 aa).

7 disulfide bridges follow: Cys26–Cys115, Cys28–Cys44, Cys43–Cys95, Cys49–Cys122, Cys50–Cys88, Cys57–Cys81, and Cys75–Cys86. Ca(2+) is bound by residues Tyr27, Gly29, and Gly31. His47 is an active-site residue. Position 48 (Asp48) interacts with Ca(2+). Residue Asp89 is part of the active site.

It depends on Ca(2+) as a cofactor. Expressed by the venom gland.

It localises to the secreted. The catalysed reaction is a 1,2-diacyl-sn-glycero-3-phosphocholine + H2O = a 1-acyl-sn-glycero-3-phosphocholine + a fatty acid + H(+). Snake venom phospholipase A2 that induces fast and sustaining local edema a few hours after injection (5-10 ug) in the hind paw, and prolongs the coagulation time of human plasma. Exhibits moderate hydrolytic activities and prefers the zwitterionic micelles (dPPC with Triton X-100) to the anionic micelles (dPPC with deoxycholate). PLA2 catalyzes the calcium-dependent hydrolysis of the 2-acyl groups in 3-sn-phosphoglycerides. In Trimeresurus stejnegeri (Chinese green tree viper), this protein is Basic phospholipase A2 Ts-G6D49.